A 76-amino-acid chain; its full sequence is Exodeoxyribonuclease 7 small subunit (76 aa).

Belongs to the XseB family. Heterooligomer composed of large and small subunits.

The protein resides in the cytoplasm. The catalysed reaction is Exonucleolytic cleavage in either 5'- to 3'- or 3'- to 5'-direction to yield nucleoside 5'-phosphates.. Functionally, bidirectionally degrades single-stranded DNA into large acid-insoluble oligonucleotides, which are then degraded further into small acid-soluble oligonucleotides. The chain is Exodeoxyribonuclease 7 small subunit from Latilactobacillus sakei subsp. sakei (strain 23K) (Lactobacillus sakei subsp. sakei).